The primary structure comprises 354 residues: Uroporphyrinogen decarboxylase (354 aa).

Substrate-binding positions include 27–31 (RQAGR), Asp-77, Tyr-154, Thr-209, and His-327.

It belongs to the uroporphyrinogen decarboxylase family. In terms of assembly, homodimer.

It is found in the cytoplasm. It catalyses the reaction uroporphyrinogen III + 4 H(+) = coproporphyrinogen III + 4 CO2. The protein operates within porphyrin-containing compound metabolism; protoporphyrin-IX biosynthesis; coproporphyrinogen-III from 5-aminolevulinate: step 4/4. Catalyzes the decarboxylation of four acetate groups of uroporphyrinogen-III to yield coproporphyrinogen-III. In Salmonella schwarzengrund (strain CVM19633), this protein is Uroporphyrinogen decarboxylase.